The following is a 212-amino-acid chain: ER lumen protein-retaining receptor 1 (212 aa).

Residues 1–4 are Lumenal-facing; sequence MNLF. Residues 5–24 traverse the membrane as a helical segment; the sequence is RFLGDLSHLLAIILLLLKIW. The Cytoplasmic portion of the chain corresponds to 25–32; sequence KSRSCAGI. Residues 33-52 form a helical membrane-spanning segment; that stretch reads SGKSQVLFAVVFTARYLDLF. Residues 47 to 48 form an interaction with the K-D-E-L motif on target proteins region; that stretch reads RY. Over 53–58 the chain is Lumenal; it reads TNYISL. The helical transmembrane segment at 59 to 79 threads the bilayer; sequence YNTCMKVVYIACSFTTVWMIY. The Cytoplasmic portion of the chain corresponds to 80-92; it reads SKFKATYDGNHDT. Residues 93 to 110 form a helical membrane-spanning segment; that stretch reads FRVEFLVIPTAILAFLVN. Topologically, residues 111 to 116 are lumenal; sequence HDFTPL. A helical transmembrane segment spans residues 117-135; it reads EILWTFSIYLESVAILPQL. Over 136–149 the chain is Cytoplasmic; it reads FMVSKTGEAETITS. The helical transmembrane segment at 150–168 threads the bilayer; the sequence is HYLFALGVYRTLYLFNWIW. The interaction with the K-D-E-L motif on target proteins stretch occupies residues 159-169; sequence RTLYLFNWIWR. Residues 169–178 lie on the Lumenal side of the membrane; sequence RYHFEGFFDL. The chain crosses the membrane as a helical span at residues 179-199; the sequence is IAIVAGLVQTVLYCDFFYLYI. Residues 200-212 lie on the Cytoplasmic side of the membrane; sequence TKVLKGKKLSLPA. Residues 204–207 form an important for recycling of cargo proteins with the sequence motif K-D-E-L from the Golgi to the endoplasmic reticulum region; sequence KGKK. Residue S209 is modified to Phosphoserine; by PKA.

This sequence belongs to the ERD2 family. In terms of assembly, upon ligand binding the receptor oligomerizes and interacts with components of the transport machinery such as ARFGAP1 and ARF1. In terms of processing, phosphorylation by PKA at Ser-209 is required for endoplasmic reticulum retention function.

The protein resides in the golgi apparatus membrane. It localises to the cytoplasmic vesicle. Its subcellular location is the COPI-coated vesicle membrane. It is found in the endoplasmic reticulum membrane. The protein localises to the endoplasmic reticulum-Golgi intermediate compartment membrane. In terms of biological role, receptor for the C-terminal sequence motif K-D-E-L that is present on endoplasmic reticulum resident proteins and that mediates their recycling from the Golgi back to the endoplasmic reticulum. The chain is ER lumen protein-retaining receptor 1 (KDELR1) from Bos taurus (Bovine).